We begin with the raw amino-acid sequence, 206 residues long: MANACKKKRLLKSVMMPAAVCAAVIGLSALGFAAEGGEGAHHVDTGKQMKDFMWRVIDFAALLGVIIWALKKANAKGALADRTANIEKALREAEEARAAAEKKFAEYSGKLEKANLEIDDIYAAIRKEAELEKERIIAEAKLTADKIREQAAATASQEVLKAKAELRGEAARLAVQMAEQSLRENIKKDDQDRLVNDYLTKVENLH.

Residues 14–34 form a helical membrane-spanning segment; sequence VMMPAAVCAAVIGLSALGFAA.

This sequence belongs to the ATPase B chain family. F-type ATPases have 2 components, F(1) - the catalytic core - and F(0) - the membrane proton channel. F(1) has five subunits: alpha(3), beta(3), gamma(1), delta(1), epsilon(1). F(0) has three main subunits: a(1), b(2) and c(10-14). The alpha and beta chains form an alternating ring which encloses part of the gamma chain. F(1) is attached to F(0) by a central stalk formed by the gamma and epsilon chains, while a peripheral stalk is formed by the delta and b chains.

It localises to the cell inner membrane. In terms of biological role, f(1)F(0) ATP synthase produces ATP from ADP in the presence of a proton or sodium gradient. F-type ATPases consist of two structural domains, F(1) containing the extramembraneous catalytic core and F(0) containing the membrane proton channel, linked together by a central stalk and a peripheral stalk. During catalysis, ATP synthesis in the catalytic domain of F(1) is coupled via a rotary mechanism of the central stalk subunits to proton translocation. Functionally, component of the F(0) channel, it forms part of the peripheral stalk, linking F(1) to F(0). The protein is ATP synthase subunit b of Geobacter metallireducens (strain ATCC 53774 / DSM 7210 / GS-15).